A 444-amino-acid polypeptide reads, in one-letter code: Probable D-serine dehydratase (444 aa).

K118 carries the post-translational modification N6-(pyridoxal phosphate)lysine.

It belongs to the serine/threonine dehydratase family. DsdA subfamily. The cofactor is pyridoxal 5'-phosphate.

It catalyses the reaction D-serine = pyruvate + NH4(+). The chain is Probable D-serine dehydratase from Acinetobacter baumannii (strain AB0057).